Here is a 526-residue protein sequence, read N- to C-terminus: Acetyl-CoA hydrolase (526 aa).

Residue 277-281 participates in CoA binding; that stretch reads GIGNI. The active-site 5-glutamyl coenzyme A thioester intermediate is the Glu302. Residues Asn392 and Gly396 each contribute to the CoA site.

This sequence belongs to the acetyl-CoA hydrolase/transferase family.

The protein resides in the cytoplasm. It catalyses the reaction acetyl-CoA + H2O = acetate + CoA + H(+). Its function is as follows. Presumably involved in regulating the intracellular acetyl-CoA pool for fatty acid and cholesterol synthesis and fatty acid oxidation. In Candida glabrata (strain ATCC 2001 / BCRC 20586 / JCM 3761 / NBRC 0622 / NRRL Y-65 / CBS 138) (Yeast), this protein is Acetyl-CoA hydrolase (ACH1).